A 231-amino-acid chain; its full sequence is Floral homeotic protein PMADS 1 (231 aa).

The 56-residue stretch at 3–58 (RGKIQIKRIENQTNRQVTYSKRRNGLFKKANELTVLCDAKVSIIMISSTGKLHEFI) folds into the MADS-box domain. The K-box domain maps to 84–174 (YEKMQEQLRK…LLEFDARQED (91 aa)).

Predominantly expressed in petals and stamens, less in carpels and sepals.

It is found in the nucleus. In terms of biological role, transcription factor involved in the genetic control of flower development. Necessary for the normal development of petals. Absence of the PMADS1 protein causes transformation of petals into sepals. The sequence is that of Floral homeotic protein PMADS 1 (PMADS1) from Petunia hybrida (Petunia).